Consider the following 199-residue polypeptide: Recombination protein RecR (199 aa).

The C4-type zinc-finger motif lies at 58-73 (CLVCGNVTGSDICPIC). The Toprim domain maps to 81–176 (GEICVVTDVA…AVTGLAQGVP (96 aa)).

This sequence belongs to the RecR family.

In terms of biological role, may play a role in DNA repair. It seems to be involved in an RecBC-independent recombinational process of DNA repair. It may act with RecF and RecO. The polypeptide is Recombination protein RecR (Paracoccus denitrificans (strain Pd 1222)).